The primary structure comprises 261 residues: Pantothenate synthetase (261 aa).

Residue 29 to 36 (MGALHNGH) participates in ATP binding. His36 acts as the Proton donor in catalysis. Gln60 is a (R)-pantoate binding site. Beta-alanine is bound at residue Gln60. 147–150 (GEKD) contacts ATP. Gln153 is a (R)-pantoate binding site. Residue 184–187 (LSSR) coordinates ATP.

This sequence belongs to the pantothenate synthetase family. In terms of assembly, homodimer.

It is found in the cytoplasm. The catalysed reaction is (R)-pantoate + beta-alanine + ATP = (R)-pantothenate + AMP + diphosphate + H(+). The protein operates within cofactor biosynthesis; (R)-pantothenate biosynthesis; (R)-pantothenate from (R)-pantoate and beta-alanine: step 1/1. In terms of biological role, catalyzes the condensation of pantoate with beta-alanine in an ATP-dependent reaction via a pantoyl-adenylate intermediate. This is Pantothenate synthetase from Francisella tularensis subsp. novicida (strain U112).